The sequence spans 397 residues: UDP-galactose translocator (397 aa).

Residues 1–21 form a disordered region; sequence MAAVGSGGSNAAAGPGAVSAG. A run of 10 helical transmembrane segments spans residues 3 to 23, 37 to 57, 65 to 85, 97 to 117, 140 to 160, 169 to 189, 200 to 220, 238 to 258, 269 to 289, and 315 to 335; these read AVGS…AGSL, YISL…IRYA, FFAT…CLLL, LALF…KLAV, TFQV…VLML, WASL…QAGG, GAGL…GVYF, LGLF…GTAV, PAVW…AVVV, and LFGF…IGAV. Residues 9–21 show a composition bias toward low complexity; the sequence is SNAAAGPGAVSAG. Positions 355-397 are disordered; sequence ASASTSGPCTHQQPPGQPPPPKLSSHRADLSTEPFLPKSVLVK.

This sequence belongs to the nucleotide-sugar transporter family. SLC35A subfamily. As to quaternary structure, interacts with SLC35A3; the interaction is reduced in the presence of SLC35A4. Found in a complex with SLC35A3 and SLC35A4.

The protein resides in the golgi apparatus membrane. It catalyses the reaction UMP(out) + UDP-alpha-D-galactose(in) = UMP(in) + UDP-alpha-D-galactose(out). It carries out the reaction UDP-N-acetyl-alpha-D-galactosamine(in) + UMP(out) = UDP-N-acetyl-alpha-D-galactosamine(out) + UMP(in). The enzyme catalyses UMP(out) + UDP-alpha-D-glucose(in) = UMP(in) + UDP-alpha-D-glucose(out). The catalysed reaction is UMP(out) + UDP-N-acetyl-alpha-D-glucosamine(in) = UMP(in) + UDP-N-acetyl-alpha-D-glucosamine(out). It catalyses the reaction UDP-alpha-D-galactose(in) + AMP(out) = UDP-alpha-D-galactose(out) + AMP(in). It carries out the reaction UDP-alpha-D-galactose(in) + CMP(out) = UDP-alpha-D-galactose(out) + CMP(in). The enzyme catalyses UDP-N-acetyl-alpha-D-galactosamine(out) + UDP-alpha-D-galactose(in) = UDP-N-acetyl-alpha-D-galactosamine(in) + UDP-alpha-D-galactose(out). The catalysed reaction is UDP-N-acetyl-alpha-D-glucosamine(out) + UDP-alpha-D-galactose(in) = UDP-N-acetyl-alpha-D-glucosamine(in) + UDP-alpha-D-galactose(out). It catalyses the reaction UDP-alpha-D-galactose(in) + UDP-alpha-D-glucose(out) = UDP-alpha-D-galactose(out) + UDP-alpha-D-glucose(in). It carries out the reaction UMP(out) + CMP(in) = UMP(in) + CMP(out). The enzyme catalyses UMP(out) + AMP(in) = UMP(in) + AMP(out). Its function is as follows. Transports uridine diphosphate galactose (UDP-galactose) from the cytosol into the Golgi apparatus, functioning as an antiporter that exchanges UDP-galactose for UMP. It is also able to exchange UDP-galactose for AMP and CMP, and to transport UDP-N-acetylgalactosamine (UDP-GalNAc) and other nucleotide sugars. As a provider of UDP-galactose to galactosyltransferases present in the Golgi apparatus, it is necessary for globotriaosylceramide/globoside (Gb3Cer) synthesis from lactosylceramide. The sequence is that of UDP-galactose translocator from Canis lupus familiaris (Dog).